A 114-amino-acid polypeptide reads, in one-letter code: Putative movement protein (114 aa).

A helical transmembrane segment spans residues 27–47; sequence LIGIILLVTVCLIVLWVCIML. The segment at 79 to 114 is disordered; sequence RTPFEATGPERERNWDARRQSTTVNPASQPNTGSVF. Basic and acidic residues predominate over residues 86-97; the sequence is GPERERNWDARR. Positions 98-114 are enriched in polar residues; it reads QSTTVNPASQPNTGSVF.

This sequence belongs to the nanovirus movement protein family.

It localises to the host cell membrane. May transport viral genome to neighboring plant cells directly through plasmosdesmata, without any budding. The movement protein allows efficient cell to cell propagation, by bypassing the host cell wall barrier. This Faba bean necrotic yellows virus (isolate Syrian SV292-88) (FBNYV) protein is Putative movement protein (DNA-M).